Here is a 196-residue protein sequence, read N- to C-terminus: Large ribosomal subunit protein bL17 (196 aa).

The interval 133–196 is disordered; the sequence is AAKRDADKKE…KPAAEEKDAK (64 aa). Residues 134–143 are compositionally biased toward basic and acidic residues; that stretch reads AKRDADKKEA. Acidic residues predominate over residues 152–164; the sequence is EVAETEAAPEAEA. Over residues 184–196 the composition is skewed to basic and acidic residues; it reads AAEKPAAEEKDAK.

This sequence belongs to the bacterial ribosomal protein bL17 family. As to quaternary structure, part of the 50S ribosomal subunit. Contacts protein L32.

This is Large ribosomal subunit protein bL17 from Arthrobacter sp. (strain FB24).